The primary structure comprises 125 residues: Protein ApaG (125 aa).

Residues 1–125 enclose the ApaG domain; the sequence is MINAPRVCVQ…FRLAIPSLIH (125 aa).

The protein is Protein ApaG of Pectobacterium atrosepticum (strain SCRI 1043 / ATCC BAA-672) (Erwinia carotovora subsp. atroseptica).